The chain runs to 222 residues: THAP domain-containing protein 6 (222 aa).

A THAP-type zinc finger spans residues 1–89 (MVKCCSAIGC…LKPGVIPSIF (89 aa)). The HCFC1-binding motif (HBM) motif lies at 139–142 (EHSY). Residues 149 to 194 (KKLKHKLDHVIGELEDTKESLRNVLDREKRFQKSLRKTIRELKDEC) are a coiled coil.

This is THAP domain-containing protein 6 (THAP6) from Homo sapiens (Human).